We begin with the raw amino-acid sequence, 212 residues long: Peptide methionine sulfoxide reductase MsrA (212 aa).

Cysteine 52 is an active-site residue.

It belongs to the MsrA Met sulfoxide reductase family.

The enzyme catalyses L-methionyl-[protein] + [thioredoxin]-disulfide + H2O = L-methionyl-(S)-S-oxide-[protein] + [thioredoxin]-dithiol. It catalyses the reaction [thioredoxin]-disulfide + L-methionine + H2O = L-methionine (S)-S-oxide + [thioredoxin]-dithiol. Functionally, has an important function as a repair enzyme for proteins that have been inactivated by oxidation. Catalyzes the reversible oxidation-reduction of methionine sulfoxide in proteins to methionine. The protein is Peptide methionine sulfoxide reductase MsrA of Shigella boydii serotype 18 (strain CDC 3083-94 / BS512).